The sequence spans 156 residues: MFTSKLLTLVLVVQPGRVLLGMKKRGFGAGKWNGFGGKVQTGETIEQAARRELLEESGLTVDTLHKIGNIKFEFIGETELMDVHIFRADNYEGEPAESDEMRPQWFDIDKIPFSQMWADDILWFPLMLQKKRFLGYFKFQGHDVIVEHKLDEVEDL.

Positions 3 to 132 constitute a Nudix hydrolase domain; the sequence is TSKLLTLVLV…WFPLMLQKKR (130 aa). Threonine 8 is a binding site for 2-oxo-dATP. O(6)-methyl-dGMP contacts are provided by residues threonine 8, lysine 23, asparagine 33, and 35 to 38; that span reads FGGK. 8-oxo-dGTP is bound at residue lysine 23. Residues asparagine 33 and 35 to 38 each bind 2-oxo-dATP; that span reads FGGK. Mg(2+) is bound by residues glycine 36, glutamate 52, glutamate 55, glutamate 56, and glutamate 100. Residues 37–58 carry the Nudix box motif; that stretch reads GKVQTGETIEQAARRELLEESG. 117-120 is a binding site for 2-oxo-dATP; sequence WADD. 117 to 120 serves as a coordination point for O(6)-methyl-dGMP; it reads WADD.

Belongs to the Nudix hydrolase family. As to quaternary structure, monomer. Mg(2+) serves as cofactor.

The protein localises to the cytoplasm. It localises to the cytosol. It is found in the mitochondrion matrix. Its subcellular location is the nucleus. It carries out the reaction 2-oxo-dATP + H2O = 2-oxo-dAMP + diphosphate + H(+). The enzyme catalyses 2-oxo-ATP + H2O = 2-oxo-AMP + diphosphate + H(+). The catalysed reaction is 8-oxo-dGTP + H2O = 8-oxo-dGMP + diphosphate + H(+). It catalyses the reaction 8-oxo-dATP + H2O = 8-oxo-dAMP + diphosphate + H(+). It carries out the reaction O(6)-methyl-dGTP + H2O = O(6)-methyl-dGMP + diphosphate + H(+). The enzyme catalyses N(6)-methyl-dATP + H2O = N(6)-methyl-dAMP + diphosphate + H(+). The catalysed reaction is N(6)-methyl-ATP + H2O = N(6)-methyl-AMP + diphosphate + H(+). With respect to regulation, inhibited by TH588. In terms of biological role, oxidized purine nucleoside triphosphate hydrolase which is a prominent sanitizer of the oxidized nucleotide pool. Catalyzes the hydrolysis of 2-oxo-dATP (2-hydroxy-dATP) into 2-oxo-dAMP. Also has a significant hydrolase activity toward 2-oxo-ATP, 8-oxo-dGTP and 8-oxo-dATP. Through the hydrolysis of oxidized purine nucleoside triphosphates, prevents their incorporation into DNA and the subsequent transversions A:T to C:G and G:C to T:A. Also catalyzes the hydrolysis of methylated purine nucleoside triphosphate preventing their integration into DNA. Through this antimutagenic activity protects cells from oxidative stress. In Danio rerio (Zebrafish), this protein is Oxidized purine nucleoside triphosphate hydrolase (nudt1).